The following is a 224-amino-acid chain: UPF0758 protein BLi02933/BL00636 (224 aa).

One can recognise an MPN domain in the interval 102–224 (VIRFPEDAAN…FVSLKEKGYL (123 aa)). H173, H175, and D186 together coordinate Zn(2+). A JAMM motif motif is present at residues 173 to 186 (HNHPSGDPAPSRED).

Belongs to the UPF0758 family.

The chain is UPF0758 protein BLi02933/BL00636 from Bacillus licheniformis (strain ATCC 14580 / DSM 13 / JCM 2505 / CCUG 7422 / NBRC 12200 / NCIMB 9375 / NCTC 10341 / NRRL NRS-1264 / Gibson 46).